Consider the following 185-residue polypeptide: Ribosome-recycling factor (185 aa).

The protein belongs to the RRF family.

The protein localises to the cytoplasm. Functionally, responsible for the release of ribosomes from messenger RNA at the termination of protein biosynthesis. May increase the efficiency of translation by recycling ribosomes from one round of translation to another. The sequence is that of Ribosome-recycling factor from Frankia casuarinae (strain DSM 45818 / CECT 9043 / HFP020203 / CcI3).